The following is a 262-amino-acid chain: Nodulation protein J (262 aa).

Residues 33–259 (ASLLGHLAEP…FLSTALLRRR (227 aa)) enclose the ABC transmembrane type-2 domain. 6 helical membrane passes run 35–55 (LLGH…GLGV), 60–80 (VGGV…SAMT), 125–145 (AALA…TQWL), 148–168 (LYAL…GMVV), 177–197 (YFIF…GAVF), and 231–251 (VVDV…PFFL).

It belongs to the ABC-2 integral membrane protein family. Lipooligosaccharide exporter (TC 3.A.1.102) subfamily. As to quaternary structure, the complex is composed of two ATP-binding proteins (NodI) and two transmembrane proteins (NodJ).

The protein localises to the cell inner membrane. In terms of biological role, part of the ABC transporter complex NodIJ involved in the export of the nodulation factors (Nod factors), the bacterial signal molecules that induce symbiosis and subsequent nodulation induction. Nod factors are LCO (lipo-chitin oligosaccharide), a modified beta-1,4-linked N-acetylglucosamine oligosaccharide. This subunit encodes the transporter. In Rhizobium leguminosarum bv. trifolii, this protein is Nodulation protein J (nodJ).